A 211-amino-acid polypeptide reads, in one-letter code: Imidazole glycerol phosphate synthase subunit HisH (211 aa).

The 208-residue stretch at 4 to 211 (RVVILDYGSG…QLLANWVATL (208 aa)) folds into the Glutamine amidotransferase type-1 domain. Cys82 acts as the Nucleophile in catalysis. Active-site residues include His192 and Glu194.

Heterodimer of HisH and HisF.

The protein resides in the cytoplasm. The enzyme catalyses 5-[(5-phospho-1-deoxy-D-ribulos-1-ylimino)methylamino]-1-(5-phospho-beta-D-ribosyl)imidazole-4-carboxamide + L-glutamine = D-erythro-1-(imidazol-4-yl)glycerol 3-phosphate + 5-amino-1-(5-phospho-beta-D-ribosyl)imidazole-4-carboxamide + L-glutamate + H(+). It carries out the reaction L-glutamine + H2O = L-glutamate + NH4(+). Its pathway is amino-acid biosynthesis; L-histidine biosynthesis; L-histidine from 5-phospho-alpha-D-ribose 1-diphosphate: step 5/9. Its function is as follows. IGPS catalyzes the conversion of PRFAR and glutamine to IGP, AICAR and glutamate. The HisH subunit catalyzes the hydrolysis of glutamine to glutamate and ammonia as part of the synthesis of IGP and AICAR. The resulting ammonia molecule is channeled to the active site of HisF. The protein is Imidazole glycerol phosphate synthase subunit HisH of Thermobifida fusca (strain YX).